A 254-amino-acid chain; its full sequence is 3-deoxy-manno-octulosonate cytidylyltransferase (254 aa).

The protein belongs to the KdsB family.

The protein resides in the cytoplasm. It carries out the reaction 3-deoxy-alpha-D-manno-oct-2-ulosonate + CTP = CMP-3-deoxy-beta-D-manno-octulosonate + diphosphate. It functions in the pathway nucleotide-sugar biosynthesis; CMP-3-deoxy-D-manno-octulosonate biosynthesis; CMP-3-deoxy-D-manno-octulosonate from 3-deoxy-D-manno-octulosonate and CTP: step 1/1. The protein operates within bacterial outer membrane biogenesis; lipopolysaccharide biosynthesis. Its function is as follows. Activates KDO (a required 8-carbon sugar) for incorporation into bacterial lipopolysaccharide in Gram-negative bacteria. This Haemophilus influenzae (strain PittGG) protein is 3-deoxy-manno-octulosonate cytidylyltransferase.